The sequence spans 180 residues: uncharacterized protein (180 aa).

Residues 114–136 (DKISESDSLPDEYKEYVVKHDSD) show a composition bias toward basic and acidic residues. The disordered stretch occupies residues 114 to 180 (DKISESDSLP…NFDNPDDNPK (67 aa)). Residues 137–146 (NSDNDSDNSD) are compositionally biased toward acidic residues. The span at 147 to 173 (NDSNNSDNDSNNSDSDSDNSNDPNNFD) shows a compositional bias: low complexity.

This is an uncharacterized protein from Acanthamoeba polyphaga (Amoeba).